The sequence spans 66 residues: Large ribosomal subunit protein bL33c (66 aa).

The protein belongs to the bacterial ribosomal protein bL33 family.

Its subcellular location is the plastid. It is found in the chloroplast. The polypeptide is Large ribosomal subunit protein bL33c (Manihot esculenta (Cassava)).